The primary structure comprises 352 residues: Sperm equatorial segment protein 1 (352 aa).

The N-terminal stretch at 1-19 (MKSLVLLVALLLWSSSVPA) is a signal peptide. The N-linked (GlcNAc...) asparagine glycan is linked to asparagine 128. The tract at residues 140–203 (IEKEEPEPEP…TESEDVPQLS (64 aa)) is disordered. The segment covering 166–193 (TESSTSPYVTSYKSPVTTSDRSTGIEIS) has biased composition (polar residues).

It belongs to the SPESP1 family. In terms of processing, glycosylated. In testis there are two predominant forms of 77- and 67-kDa and a form of 47-kDa, whereas in epididymal sperm from caput, corpus, and cauda there are two forms of 47- and 43-kDa. Testis forms contain complex carbohydrate residues. Epididymal sperm forms are N-glycosylated. Then undergoes significant glycosylation in the testis and that the majority of these glycoconjugates are removed by the time sperm reach the caput epididymis.

Its subcellular location is the cytoplasmic vesicle. The protein localises to the secretory vesicle. The protein resides in the acrosome. Involved in fertilization ability of sperm. This chain is Sperm equatorial segment protein 1, found in Macaca fascicularis (Crab-eating macaque).